We begin with the raw amino-acid sequence, 222 residues long: Small ribosomal subunit protein uS3 (222 aa).

The KH type-2 domain maps to 39–108 (IRRHIKEKLY…TISLDIKEIK (70 aa)).

This sequence belongs to the universal ribosomal protein uS3 family. Part of the 30S ribosomal subunit. Forms a tight complex with proteins S10 and S14.

Binds the lower part of the 30S subunit head. Binds mRNA in the 70S ribosome, positioning it for translation. The polypeptide is Small ribosomal subunit protein uS3 (Caldicellulosiruptor saccharolyticus (strain ATCC 43494 / DSM 8903 / Tp8T 6331)).